The sequence spans 65 residues: Large ribosomal subunit protein uL29 (65 aa).

It belongs to the universal ribosomal protein uL29 family.

In Acidithiobacillus ferrooxidans (strain ATCC 23270 / DSM 14882 / CIP 104768 / NCIMB 8455) (Ferrobacillus ferrooxidans (strain ATCC 23270)), this protein is Large ribosomal subunit protein uL29.